We begin with the raw amino-acid sequence, 371 residues long: Nicotinate-nucleotide pyrophosphorylase [carboxylating], chloroplastic (371 aa).

The N-terminal 48 residues, 1–48 (MPAAAAAAAPPNPNVLQLAPRLRGLVSFPSSYSSSSPFSNRLRLRLPR), are a transit peptide targeting the chloroplast. Residues R162, 193 to 195 (TRK), R217, K227, E260, D287, 319 to 321 (SGN), and 340 to 342 (SGA) contribute to the substrate site.

This sequence belongs to the NadC/ModD family.

The protein localises to the plastid. Its subcellular location is the chloroplast. The enzyme catalyses nicotinate beta-D-ribonucleotide + CO2 + diphosphate = quinolinate + 5-phospho-alpha-D-ribose 1-diphosphate + 2 H(+). It participates in cofactor biosynthesis; NAD(+) biosynthesis; nicotinate D-ribonucleotide from quinolinate: step 1/1. Its function is as follows. Involved in the catabolism of quinolinic acid (QA). The sequence is that of Nicotinate-nucleotide pyrophosphorylase [carboxylating], chloroplastic from Oryza sativa subsp. japonica (Rice).